We begin with the raw amino-acid sequence, 76 residues long: Monocarboxylate transporter 1 (76 aa).

The next 3 membrane-spanning stretches (helical) occupy residues 1–18 (LSIL…MGLA), 28–48 (IQYF…LAPL), and 53–73 (IGFC…SSVL). Asp8 serves as a coordination point for H(+). Arg12 provides a ligand contact to (S)-lactate.

Belongs to the major facilitator superfamily. Monocarboxylate porter (TC 2.A.1.13) family. As to quaternary structure, interacts with BSG; interaction mediates SLC16A1 targeting to the plasma membrane. Interacts with EMB; interaction mediates SLC16A1 targeting to the plasma membrane.

It is found in the cell membrane. It localises to the basolateral cell membrane. The protein resides in the apical cell membrane. The catalysed reaction is (S)-lactate(in) + H(+)(in) = (S)-lactate(out) + H(+)(out). It carries out the reaction acetate(out) + H(+)(out) = acetate(in) + H(+)(in). The enzyme catalyses acetoacetate(out) + H(+)(out) = acetoacetate(in) + H(+)(in). It catalyses the reaction pyruvate(out) + H(+)(out) = pyruvate(in) + H(+)(in). The catalysed reaction is (R)-3-hydroxybutanoate(out) + H(+)(out) = (R)-3-hydroxybutanoate(in) + H(+)(in). It carries out the reaction 3-methyl-2-oxobutanoate(out) + H(+)(out) = 3-methyl-2-oxobutanoate(in) + H(+)(in). The enzyme catalyses 4-methyl-2-oxopentanoate(out) + H(+)(out) = 4-methyl-2-oxopentanoate(in) + H(+)(in). It catalyses the reaction succinate(in) + 2 H(+)(in) = succinate(out) + 2 H(+)(out). Bidirectional proton-coupled monocarboxylate transporter. Catalyzes the rapid transport across the plasma membrane of many monocarboxylates such as lactate, pyruvate, acetate and the ketone bodies acetoacetate and beta-hydroxybutyrate, and thus contributes to the maintenance of intracellular pH. The transport direction is determined by the proton motive force and the concentration gradient of the substrate monocarboxylate. MCT1 is a major lactate exporter. Plays a role in cellular responses to a high-fat diet by modulating the cellular levels of lactate and pyruvate that contribute to the regulation of central metabolic pathways and insulin secretion, with concomitant effects on plasma insulin levels and blood glucose homeostasis. Facilitates the protonated monocarboxylate form of succinate export, that its transient protonation upon muscle cell acidification in exercising muscle and ischemic heart. Functions via alternate outward- and inward-open conformation states. Protonation and deprotonation is essential for the conformational transition. The sequence is that of Monocarboxylate transporter 1 (SLC16A1) from Meriones unguiculatus (Mongolian jird).